Consider the following 1342-residue polypeptide: DNA-directed RNA polymerase subunit beta (1342 aa).

The protein belongs to the RNA polymerase beta chain family. The RNAP catalytic core consists of 2 alpha, 1 beta, 1 beta' and 1 omega subunit. When a sigma factor is associated with the core the holoenzyme is formed, which can initiate transcription.

It carries out the reaction RNA(n) + a ribonucleoside 5'-triphosphate = RNA(n+1) + diphosphate. Functionally, DNA-dependent RNA polymerase catalyzes the transcription of DNA into RNA using the four ribonucleoside triphosphates as substrates. The polypeptide is DNA-directed RNA polymerase subunit beta (Actinobacillus pleuropneumoniae serotype 3 (strain JL03)).